Here is a 267-residue protein sequence, read N- to C-terminus: Thymidylate synthase (267 aa).

DUMP is bound at residue Arg25. Residue His55 coordinates (6R)-5,10-methylene-5,6,7,8-tetrahydrofolate. DUMP is bound at residue 130–131 (RR). The active-site Nucleophile is the Cys150. DUMP is bound by residues 170–173 (RSAD), Asn181, and 211–213 (HIY). (6R)-5,10-methylene-5,6,7,8-tetrahydrofolate is bound at residue Asp173. Ala266 contacts (6R)-5,10-methylene-5,6,7,8-tetrahydrofolate.

The protein belongs to the thymidylate synthase family. Bacterial-type ThyA subfamily. As to quaternary structure, homodimer.

It localises to the cytoplasm. It catalyses the reaction dUMP + (6R)-5,10-methylene-5,6,7,8-tetrahydrofolate = 7,8-dihydrofolate + dTMP. It functions in the pathway pyrimidine metabolism; dTTP biosynthesis. Functionally, catalyzes the reductive methylation of 2'-deoxyuridine-5'-monophosphate (dUMP) to 2'-deoxythymidine-5'-monophosphate (dTMP) while utilizing 5,10-methylenetetrahydrofolate (mTHF) as the methyl donor and reductant in the reaction, yielding dihydrofolate (DHF) as a by-product. This enzymatic reaction provides an intracellular de novo source of dTMP, an essential precursor for DNA biosynthesis. This is Thymidylate synthase from Corynebacterium efficiens (strain DSM 44549 / YS-314 / AJ 12310 / JCM 11189 / NBRC 100395).